Reading from the N-terminus, the 446-residue chain is tRNA modification GTPase MnmE (446 aa).

(6S)-5-formyl-5,6,7,8-tetrahydrofolate-binding residues include R24, E81, and K120. The TrmE-type G domain occupies 216–368 (GLHAVLIGPP…LHTRLRELAL (153 aa)). Residue N226 participates in K(+) binding. Residues 226–231 (NAGKSS), 245–251 (TDVAGTT), and 270–273 (DTAG) each bind GTP. S230 contributes to the Mg(2+) binding site. The K(+) site is built by T245, V247, and T250. A Mg(2+)-binding site is contributed by T251. K446 provides a ligand contact to (6S)-5-formyl-5,6,7,8-tetrahydrofolate.

Belongs to the TRAFAC class TrmE-Era-EngA-EngB-Septin-like GTPase superfamily. TrmE GTPase family. Homodimer. Heterotetramer of two MnmE and two MnmG subunits. Requires K(+) as cofactor.

The protein localises to the cytoplasm. Exhibits a very high intrinsic GTPase hydrolysis rate. Involved in the addition of a carboxymethylaminomethyl (cmnm) group at the wobble position (U34) of certain tRNAs, forming tRNA-cmnm(5)s(2)U34. The protein is tRNA modification GTPase MnmE of Xanthomonas campestris pv. campestris (strain 8004).